Reading from the N-terminus, the 288-residue chain is 2-hydroxy-6-oxononadienedioate/2-hydroxy-6-oxononatrienedioate hydrolase (288 aa).

The active-site Proton acceptor is His267.

Belongs to the AB hydrolase superfamily. MhpC family. As to quaternary structure, homodimer.

It catalyses the reaction (2Z,4E)-2-hydroxy-6-oxonona-2,4-dienedioate + H2O = (2Z)-2-hydroxypenta-2,4-dienoate + succinate + H(+). The enzyme catalyses (2Z,4E,7E)-2-hydroxy-6-oxonona-2,4,7-trienedioate + H2O = (2Z)-2-hydroxypenta-2,4-dienoate + fumarate + H(+). The protein operates within aromatic compound metabolism; 3-phenylpropanoate degradation. In terms of biological role, catalyzes the cleavage of the C5-C6 bond of 2-hydroxy-6-oxononadienedioate and 2-hydroxy-6-oxononatrienedioate, a dienol ring fission product of the bacterial meta-cleavage pathway for degradation of phenylpropionic acid. The polypeptide is 2-hydroxy-6-oxononadienedioate/2-hydroxy-6-oxononatrienedioate hydrolase (Escherichia coli (strain K12 / DH10B)).